Consider the following 445-residue polypeptide: Argininosuccinate synthase (445 aa).

ATP is bound by residues 17-25 and alanine 43; that span reads AFSGGLDTS. An L-citrulline-binding site is contributed by tyrosine 99. Residues glycine 129 and threonine 131 each contribute to the ATP site. Threonine 131, asparagine 135, and aspartate 136 together coordinate L-aspartate. Asparagine 135 contributes to the L-citrulline binding site. ATP is bound at residue aspartate 136. Residues arginine 139 and serine 192 each coordinate L-citrulline. Aspartate 194 provides a ligand contact to ATP. The L-citrulline site is built by threonine 201, glutamate 203, and glutamate 280.

The protein belongs to the argininosuccinate synthase family. Type 2 subfamily. As to quaternary structure, homotetramer.

It localises to the cytoplasm. The enzyme catalyses L-citrulline + L-aspartate + ATP = 2-(N(omega)-L-arginino)succinate + AMP + diphosphate + H(+). It functions in the pathway amino-acid biosynthesis; L-arginine biosynthesis; L-arginine from L-ornithine and carbamoyl phosphate: step 2/3. This chain is Argininosuccinate synthase, found in Ralstonia pickettii (strain 12J).